Here is a 251-residue protein sequence, read N- to C-terminus: Triosephosphate isomerase (251 aa).

9 to 11 contacts substrate; the sequence is NWK. His-95 functions as the Electrophile in the catalytic mechanism. The Proton acceptor role is filled by Glu-167. Substrate contacts are provided by residues Gly-173, Ser-213, and 234-235; that span reads GG.

This sequence belongs to the triosephosphate isomerase family. Homodimer.

It localises to the cytoplasm. It carries out the reaction D-glyceraldehyde 3-phosphate = dihydroxyacetone phosphate. The protein operates within carbohydrate biosynthesis; gluconeogenesis. Its pathway is carbohydrate degradation; glycolysis; D-glyceraldehyde 3-phosphate from glycerone phosphate: step 1/1. Involved in the gluconeogenesis. Catalyzes stereospecifically the conversion of dihydroxyacetone phosphate (DHAP) to D-glyceraldehyde-3-phosphate (G3P). The sequence is that of Triosephosphate isomerase from Fusobacterium nucleatum subsp. nucleatum (strain ATCC 25586 / DSM 15643 / BCRC 10681 / CIP 101130 / JCM 8532 / KCTC 2640 / LMG 13131 / VPI 4355).